Reading from the N-terminus, the 324-residue chain is Melanoma-associated antigen B16 (324 aa).

Basic and acidic residues predominate over residues 1 to 15; sequence MSQDQESPRCTHDQH. 2 disordered regions span residues 1–22 and 39–108; these read MSQDQESPRCTHDQHLQTFSET and LSSS…PRNV. Over residues 70–81 the composition is skewed to low complexity; the sequence is SSSIAVTTTSSS. Acidic residues predominate over residues 82 to 95; that stretch reads ESDEASSNQEEEDS. The MAGE domain maps to 113-312; it reads LDQKVAFLVN…HSFPSQYAEA (200 aa).

This is Melanoma-associated antigen B16 (MAGEB16) from Homo sapiens (Human).